We begin with the raw amino-acid sequence, 245 residues long: MYRYKITIEYLGTHFSGWQRQAGVLSVQQILEEAIYKFSGEQVTLFGSGRTDAGVHAIGQIAHFDLSKYLEPYKIIKAINYFVRPYAVGVWNCELVSNNFHARFSATSRHYIYRIVNRTYPSVIDLNRVWWISAPLDVLAMQQAATYLLGKHDFTSFRSSSCQSKSPIKTLTEINIIKEYEEIKLYLSAPSFLHYMVRNIVGSLVLVGKNIWQVEQIKNVLDAKDRKVAGPTAPAFGLYFIKAEY.

Asp52 functions as the Nucleophile in the catalytic mechanism. Residue Tyr111 coordinates substrate.

Belongs to the tRNA pseudouridine synthase TruA family. In terms of assembly, homodimer.

The enzyme catalyses uridine(38/39/40) in tRNA = pseudouridine(38/39/40) in tRNA. Functionally, formation of pseudouridine at positions 38, 39 and 40 in the anticodon stem and loop of transfer RNAs. This Rickettsia typhi (strain ATCC VR-144 / Wilmington) protein is tRNA pseudouridine synthase A.